A 149-amino-acid polypeptide reads, in one-letter code: Large ribosomal subunit protein bL9 (149 aa).

This sequence belongs to the bacterial ribosomal protein bL9 family.

Functionally, binds to the 23S rRNA. The polypeptide is Large ribosomal subunit protein bL9 (Bacillus licheniformis (strain ATCC 14580 / DSM 13 / JCM 2505 / CCUG 7422 / NBRC 12200 / NCIMB 9375 / NCTC 10341 / NRRL NRS-1264 / Gibson 46)).